The primary structure comprises 177 residues: Small ribosomal subunit protein uS5 (177 aa).

An S5 DRBM domain is found at leucine 14 to isoleucine 77.

Belongs to the universal ribosomal protein uS5 family. As to quaternary structure, part of the 30S ribosomal subunit. Contacts proteins S4 and S8.

With S4 and S12 plays an important role in translational accuracy. Functionally, located at the back of the 30S subunit body where it stabilizes the conformation of the head with respect to the body. The protein is Small ribosomal subunit protein uS5 of Blochmanniella floridana.